Consider the following 501-residue polypeptide: Aldehyde dehydrogenase, cytosolic 1 (501 aa).

At S2 the chain carries N-acetylserine. Residues K91 and K128 each carry the N6-acetyllysine modification. 246–251 provides a ligand contact to NAD(+); the sequence is GSTEVG. K252 carries the N6-acetyllysine modification. E269 functions as the Proton acceptor in the catalytic mechanism. The Nucleophile role is filled by C303. Residues K353, K367, and K410 each carry the N6-acetyllysine modification. Residue S413 is modified to Phosphoserine. An N6-acetyllysine mark is found at K419, K435, and K495.

The protein belongs to the aldehyde dehydrogenase family. Homotetramer. Very low levels in lung and liver.

The protein localises to the cytoplasm. The catalysed reaction is an aldehyde + NAD(+) + H2O = a carboxylate + NADH + 2 H(+). It functions in the pathway alcohol metabolism; ethanol degradation; acetate from ethanol: step 2/2. Its function is as follows. Can oxidize benzaldehyde, propionaldehyde and acetaldehyde. No detectable activity with retinal. This chain is Aldehyde dehydrogenase, cytosolic 1 (Aldh1a7), found in Rattus norvegicus (Rat).